A 228-amino-acid polypeptide reads, in one-letter code: 3,4-dihydroxy-2-butanone 4-phosphate synthase (228 aa).

Residues 37–38 (RE), Asp-42, 150–154 (RPGHT), and Glu-174 contribute to the D-ribulose 5-phosphate site. Glu-38 serves as a coordination point for Mg(2+). His-153 is a binding site for Mg(2+).

The protein belongs to the DHBP synthase family. As to quaternary structure, homodimer. Requires Mg(2+) as cofactor. It depends on Mn(2+) as a cofactor.

The enzyme catalyses D-ribulose 5-phosphate = (2S)-2-hydroxy-3-oxobutyl phosphate + formate + H(+). The protein operates within cofactor biosynthesis; riboflavin biosynthesis; 2-hydroxy-3-oxobutyl phosphate from D-ribulose 5-phosphate: step 1/1. Its function is as follows. Catalyzes the conversion of D-ribulose 5-phosphate to formate and 3,4-dihydroxy-2-butanone 4-phosphate. The protein is 3,4-dihydroxy-2-butanone 4-phosphate synthase of Chloroherpeton thalassium (strain ATCC 35110 / GB-78).